The following is a 418-amino-acid chain: Creatine kinase U-type, mitochondrial (418 aa).

Residues 1-39 (MAGPFSRLLSARPGLKLLALAGAGSLAAGILLRPESVRA) constitute a mitochondrion transit peptide. Residues 40 to 64 (ATGERRRLYPPSAEYPDLRKHNNCM) form a cardiolipin-binding region. In terms of domain architecture, Phosphagen kinase N-terminal spans 46–132 (RLYPPSAEYP…FDPVIQERHN (87 aa)). At Ser152 the chain carries Phosphoserine. A Phosphagen kinase C-terminal domain is found at 159 to 401 (YVLSSRVRTG…NYLIDCERRL (243 aa)). 162–166 (SSRVR) is an ATP binding site. Ser197 bears the Phosphoserine mark. Thr214 carries the post-translational modification Phosphothreonine. His225 serves as a coordination point for ATP. At Ser233 the chain carries Phosphoserine. ATP-binding positions include Arg270, Arg326, 354-359 (RGTGGV), and Asp369. A Phosphothreonine modification is found at Thr356.

Belongs to the ATP:guanido phosphotransferase family. As to quaternary structure, exists as an octamer composed of four MTCK homodimers. In many tissues, with highest levels in brain gut and kidney. In the kidney localized primarily in the outer medulla in the thick ascending limb and distal convoluted tubule.

It is found in the mitochondrion inner membrane. The enzyme catalyses creatine + ATP = N-phosphocreatine + ADP + H(+). Functionally, reversibly catalyzes the transfer of phosphate between ATP and various phosphogens (e.g. creatine phosphate). Creatine kinase isoenzymes play a central role in energy transduction in tissues with large, fluctuating energy demands, such as skeletal muscle, heart, brain and spermatozoa. The sequence is that of Creatine kinase U-type, mitochondrial (Ckmt1) from Rattus norvegicus (Rat).